The sequence spans 491 residues: GTPase Der (491 aa).

The region spanning 3 to 178 (AKIALVGRPN…EMRDLLPEED (176 aa)) is the EngA-type G 1 domain. Residues 9-16 (GRPNVGKS), 57-61 (DTGGI), and 130-133 (NKVD) each bind GTP. A compositionally biased stretch (acidic residues) spans 198–224 (DAETEDGASASETEEDITEETVEDEPE). Residues 198 to 225 (DAETEDGASASETEEDITEETVEDEPEA) form a disordered region. In terms of domain architecture, EngA-type G 2 spans 227–400 (LRLCMLGRPN…LAARIRRECS (174 aa)). GTP-binding positions include 233 to 240 (GRPNAGKS), 280 to 284 (DTAGV), and 345 to 348 (NKMD). The 85-residue stretch at 401–485 (VRIPTGQLNR…PMRVHFRSSH (85 aa)) folds into the KH-like domain.

The protein belongs to the TRAFAC class TrmE-Era-EngA-EngB-Septin-like GTPase superfamily. EngA (Der) GTPase family. In terms of assembly, associates with the 50S ribosomal subunit.

In terms of biological role, GTPase that plays an essential role in the late steps of ribosome biogenesis. The protein is GTPase Der of Nitratidesulfovibrio vulgaris (strain ATCC 29579 / DSM 644 / CCUG 34227 / NCIMB 8303 / VKM B-1760 / Hildenborough) (Desulfovibrio vulgaris).